We begin with the raw amino-acid sequence, 418 residues long: Tektin-1 (418 aa).

4 coiled-coil regions span residues 20–107 (NKSQ…SYKE), 134–177 (QELQ…DLRD), 266–308 (NGLK…QQEG), and 332–383 (IAQY…ENTI).

Belongs to the tektin family. Microtubule inner protein component of sperm flagellar doublet microtubules. Ubiquitinated, leading to its degradation. Deubiquitinated by USP16, promoting its stability.

It localises to the cytoplasm. It is found in the cytoskeleton. Its subcellular location is the cilium axoneme. The protein localises to the flagellum axoneme. Functionally, microtubule inner protein (MIP) part of the dynein-decorated doublet microtubules (DMTs) in cilia and flagellar axoneme. Forms filamentous polymers in the walls of ciliary and flagellar microtubules. The chain is Tektin-1 (Tekt1) from Mus musculus (Mouse).